The sequence spans 278 residues: Probable CCR4-associated factor 1 homolog 5 (278 aa).

4 residues coordinate a divalent metal cation: aspartate 30, glutamate 32, aspartate 145, and aspartate 217.

This sequence belongs to the CAF1 family. Component of the CCR4-NOT complex, at least composed of CRR4 and CAF1 proteins. It depends on a divalent metal cation as a cofactor.

Its subcellular location is the nucleus. It is found in the cytoplasm. The enzyme catalyses Exonucleolytic cleavage of poly(A) to 5'-AMP.. Functionally, ubiquitous transcription factor required for a diverse set of processes. It is a component of the CCR4 complex involved in the control of gene expression. This is Probable CCR4-associated factor 1 homolog 5 (CAF1-5) from Arabidopsis thaliana (Mouse-ear cress).